The primary structure comprises 307 residues: Probable porphobilinogen deaminase (307 aa).

At Cys-240 the chain carries S-(dipyrrolylmethanemethyl)cysteine.

It belongs to the HMBS family. The cofactor is dipyrromethane.

The enzyme catalyses 4 porphobilinogen + H2O = hydroxymethylbilane + 4 NH4(+). It functions in the pathway porphyrin-containing compound metabolism; protoporphyrin-IX biosynthesis; coproporphyrinogen-III from 5-aminolevulinate: step 2/4. In terms of biological role, tetrapolymerization of the monopyrrole PBG into the hydroxymethylbilane pre-uroporphyrinogen in several discrete steps. The sequence is that of Probable porphobilinogen deaminase (hemC) from Aeropyrum pernix (strain ATCC 700893 / DSM 11879 / JCM 9820 / NBRC 100138 / K1).